The sequence spans 569 residues: Peptide transporter PTR_C (569 aa).

Basic and acidic residues predominate over residues 1 to 25 (MSQNVDEKVVHDDASVIRSVDRSES). Residues 1–43 (MSQNVDEKVVHDDASVIRSVDRSESDSYPDSVSPEGAEPSEEE) form a disordered region. A helical membrane pass occupies residues 54–74 (VPLACWLVAIVELAERFSYYG). Asn98 carries N-linked (GlcNAc...) asparagine glycosylation. 3 helical membrane-spanning segments follow: residues 104–124 (ALSY…AWVA), 134–154 (ISIF…TSLP), and 159–179 (NTSL…TGGV). Asn212 is a glycosylation site (N-linked (GlcNAc...) asparagine). 8 helical membrane-spanning segments follow: residues 215–235 (IQNV…SVIA), 245–265 (FWAA…ALFL), 322–342 (ALYA…YGQM), 366–386 (IDSI…YPFI), 398–418 (IFWG…LQHF), 444–464 (VALQ…ASIT), 479–499 (SFIM…GIAL), and 510–530 (WTYT…WFLF).

The protein belongs to the major facilitator superfamily. Proton-dependent oligopeptide transporter (POT/PTR) (TC 2.A.17) family.

It is found in the cell membrane. It carries out the reaction a dipeptide(out) + H(+)(out) = a dipeptide(in) + H(+)(in). The catalysed reaction is an L-amino acid tripeptide(out) + H(+)(out) = an L-amino acid tripeptide(in) + H(+)(in). Peptide transporter that exploits the inwardly directed proton motive force to facilitate the cellular uptake of di/tripeptides. Shows strong uptake specificity towards the dipeptides Tyr-Phe and Leu-Gly and the tripeptide Phe-Gly-Gly, when compared to PTR_A and PTR_B. Also able to import peptide-based antifungals such as the peptide-nucleoside drug nikkomycin Z as well as the glucosamine-6-phosphate synthase inhibitor, L-norvalyl-N3-(4-methoxyfumaroyl)-L-2,3-diaminopropionoic acid (Nva-FMDP). The polypeptide is Peptide transporter PTR_C (Candidozyma auris (Yeast)).